The chain runs to 85 residues: MAKERGDLLFPSIESEKRKHKLKRLVQAPNSFFMDINCHGCRTITTVFSHAQNVVICSSCSTVIAQPTGGRARITAGCRLRQKSD.

A C4-type zinc finger spans residues 38 to 60 (CHGCRTITTVFSHAQNVVICSSC).

It belongs to the eukaryotic ribosomal protein eS27 family. Zn(2+) serves as cofactor.

This chain is Small ribosomal subunit protein eS27 (rps27), found in Dictyostelium discoideum (Social amoeba).